Reading from the N-terminus, the 265-residue chain is 5'-nucleotidase SurE (265 aa).

A divalent metal cation contacts are provided by D8, D9, S39, and N96.

The protein belongs to the SurE nucleotidase family. A divalent metal cation serves as cofactor.

It localises to the cytoplasm. It catalyses the reaction a ribonucleoside 5'-phosphate + H2O = a ribonucleoside + phosphate. Functionally, nucleotidase that shows phosphatase activity on nucleoside 5'-monophosphates. This Dehalococcoides mccartyi (strain ATCC BAA-2100 / JCM 16839 / KCTC 5957 / BAV1) protein is 5'-nucleotidase SurE.